A 147-amino-acid chain; its full sequence is Hemoglobin subunit beta-1 (147 aa).

The Globin domain maps to 3–147 (NLTAKERQLI…IADALGKGYH (145 aa)). Positions 64 and 93 each coordinate heme b.

The protein belongs to the globin family. As to quaternary structure, heterotetramer of two alpha chains and two beta chains. Red blood cells.

Involved in oxygen transport from the lung to the various peripheral tissues. This chain is Hemoglobin subunit beta-1 (hbb1), found in Xenopus tropicalis (Western clawed frog).